A 192-amino-acid polypeptide reads, in one-letter code: Hydrogenase expression/formation protein HupD (192 aa).

Ni(2+)-binding residues include Glu23, Asp69, and His100.

It belongs to the peptidase A31 family.

Not known. Could be involved in the processing of hydrogenase. The polypeptide is Hydrogenase expression/formation protein HupD (hupD) (Bradyrhizobium diazoefficiens (strain JCM 10833 / BCRC 13528 / IAM 13628 / NBRC 14792 / USDA 110)).